Reading from the N-terminus, the 99-residue chain is MSPTSFFLLTMLLVLVTETAAKRPRERFSQAIEEFSSESSEANSPKSIVHEEVYEEKKFKRNMVNGEDGEDSKRASAGEIERSYLRKKEKQRFAQEMDK.

Positions 1 to 21 (MSPTSFFLLTMLLVLVTETAA) are cleaved as a signal peptide.

This sequence belongs to the SVP2/SVP5/SVP6 family. Testis.

The protein localises to the secreted. The protein resides in the extracellular space. The chain is Seminal vesicle secretory protein 6 (Svs6) from Mus musculus (Mouse).